Here is a 280-residue protein sequence, read N- to C-terminus: L-proline cis-4-hydroxylase (280 aa).

Positions 106, 108, and 154 each coordinate Fe cation. A 2-oxoglutarate-binding site is contributed by R164.

This sequence belongs to the L-proline cis-4-/cis-3-hydroxylase family. Requires Fe(2+) as cofactor.

It carries out the reaction L-proline + 2-oxoglutarate + O2 = cis-4-hydroxy-L-proline + succinate + CO2. Inhibited by metal ions such as Co(2+), Zn(2+), Cu(2+) or Ni(2+). Is also inhibited by EDTA or diethylpyrocarbonate (DEPC) in vitro. Unlike the procollagen-proline cis-3- and trans-4-hydroxylases from mammals, does not necessarily require L-ascorbate for activity although it does increase the activity of the enzyme. Dioxygenase that catalyzes the 2-oxoglutarate-dependent selective hydroxylation of free L-proline to cis-4-hydroxy-L-proline (cis-4-Hyp). This Rhizobium meliloti (strain 1021) (Ensifer meliloti) protein is L-proline cis-4-hydroxylase.